Here is a 286-residue protein sequence, read N- to C-terminus: E3 ubiquitin-protein ligase RNF170 (286 aa).

Residues 1–52 (MQRYWRFQDNKIQDICFGVLGESWIQRPVMARYYSEGQSLQQDDSFIEGVSD) lie on the Lumenal side of the membrane. The helical transmembrane segment at 53 to 73 (QVLVAVVVSLALTATLLYALL) threads the bilayer. The Cytoplasmic portion of the chain corresponds to 74–229 (RNVQQNIHPE…GGLFWMFRIR (156 aa)). An RING-type zinc finger spans residues 115 to 158 (CPICLHQASFPVETNCGHLFCGSCIIAYWRYGSWLGAISCPICR). A helical membrane pass occupies residues 230–250 (IMLCLMGAFFYLISPLDFVPE). Position 251 (alanine 251) is a topological domain, lumenal. A helical membrane pass occupies residues 252 to 272 (LFGILGFLDDFFVIFLLLIYI). Residues 273–286 (SIMYREVITQRLTR) are Cytoplasmic-facing.

Constitutively associated with the ERLIN1/ERLIN 2 complex. Interacts with activated ITPR1.

It is found in the endoplasmic reticulum membrane. The enzyme catalyses S-ubiquitinyl-[E2 ubiquitin-conjugating enzyme]-L-cysteine + [acceptor protein]-L-lysine = [E2 ubiquitin-conjugating enzyme]-L-cysteine + N(6)-ubiquitinyl-[acceptor protein]-L-lysine.. Its pathway is protein modification; protein ubiquitination. Its function is as follows. E3 ubiquitin-protein ligase that plays an essential role in stimulus-induced inositol 1,4,5-trisphosphate receptor type 1 (ITPR1) ubiquitination and degradation via the endoplasmic reticulum-associated degradation (ERAD) pathway. Also involved in ITPR1 turnover in resting cells. Selectively inhibits the TLR3-triggered innate immune response by promoting the 'Lys-48'-linked polyubiquitination and degradation of TLR3. This chain is E3 ubiquitin-protein ligase RNF170 (Rnf170), found in Mus musculus (Mouse).